Consider the following 455-residue polypeptide: Phosphoglucosamine mutase (455 aa).

S108 functions as the Phosphoserine intermediate in the catalytic mechanism. Positions 108, 246, 248, and 250 each coordinate Mg(2+). S108 carries the phosphoserine modification.

It belongs to the phosphohexose mutase family. Requires Mg(2+) as cofactor. Activated by phosphorylation.

The catalysed reaction is alpha-D-glucosamine 1-phosphate = D-glucosamine 6-phosphate. Functionally, catalyzes the conversion of glucosamine-6-phosphate to glucosamine-1-phosphate. In Frankia casuarinae (strain DSM 45818 / CECT 9043 / HFP020203 / CcI3), this protein is Phosphoglucosamine mutase.